Reading from the N-terminus, the 95-residue chain is uncharacterized protein (95 aa).

This is an uncharacterized protein from Schizosaccharomyces pombe (strain 972 / ATCC 24843) (Fission yeast).